The primary structure comprises 590 residues: KNR4/SMI1 homolog 2 (590 aa).

3 disordered regions span residues 59-97 (SSSH…SNTN), 216-239 (FQHQ…ETHG), and 407-590 (TPQR…DVAL). The segment covering 71 to 85 (GSRTSLSRNGSSTTV) has biased composition (polar residues). Positions 217-226 (QHQQQQQQHQ) are enriched in low complexity. The segment covering 430 to 454 (PSMSGATANTNKSQNPLINMESSSK) has biased composition (polar residues). Composition is skewed to basic and acidic residues over residues 470-481 (PEEPVKKSEVKS) and 489-515 (EPEK…AKED). Positions 516–528 (DKEEEEEEQEEEK) are enriched in acidic residues. The segment covering 554 to 568 (TQKKNQSKKAKKQQQ) has biased composition (basic residues). Acidic residues predominate over residues 576–590 (NDVEEVAEDLNDVAL).

Belongs to the KNR4/SMI1 family.

The sequence is that of KNR4/SMI1 homolog 2 from Debaryomyces hansenii (strain ATCC 36239 / CBS 767 / BCRC 21394 / JCM 1990 / NBRC 0083 / IGC 2968) (Yeast).